The chain runs to 259 residues: Thiazole synthase (259 aa).

K99 serves as the catalytic Schiff-base intermediate with DXP. Residues G161, A187 to G188, and N209 to T210 each bind 1-deoxy-D-xylulose 5-phosphate.

Belongs to the ThiG family. As to quaternary structure, homotetramer. Forms heterodimers with either ThiH or ThiS.

Its subcellular location is the cytoplasm. It carries out the reaction [ThiS sulfur-carrier protein]-C-terminal-Gly-aminoethanethioate + 2-iminoacetate + 1-deoxy-D-xylulose 5-phosphate = [ThiS sulfur-carrier protein]-C-terminal Gly-Gly + 2-[(2R,5Z)-2-carboxy-4-methylthiazol-5(2H)-ylidene]ethyl phosphate + 2 H2O + H(+). Its pathway is cofactor biosynthesis; thiamine diphosphate biosynthesis. Its function is as follows. Catalyzes the rearrangement of 1-deoxy-D-xylulose 5-phosphate (DXP) to produce the thiazole phosphate moiety of thiamine. Sulfur is provided by the thiocarboxylate moiety of the carrier protein ThiS. In vitro, sulfur can be provided by H(2)S. This is Thiazole synthase from Nautilia profundicola (strain ATCC BAA-1463 / DSM 18972 / AmH).